A 493-amino-acid chain; its full sequence is MARPLPILGGILLSFSPPAEATAQYSIIPEPSRTELRQETAKTLQLLSDQEVPTLETDAYRLTVTPQGAHLASGGREGRIYGLATLRQLRDQLAGQPEGIPCGVITDKPRYPWRGLMVDPARHFIPAADLKKFVDMMAYYKFNRLHLHLTDNQGWRLPVPGYPKLKSVASRREESFGDGIPHEGMYTKQELKELVAYCAARGIDVIPEIDMPGHNQALHAAYPEFFCFPKPDMNVRTTAGNSKELVCPQKPEVWKFYASVFNELKDIFPSGIVHLGGDEAPTELWEKCPLCREARTRAAMKDEQEQMKAFFAKTAALLAKNGQTPQFWYEGNAGIYHPGETVYAWRQGQALQSIEKTKKAGLNLIMASSEYCYLDFPQIQGQRNWGWMKTTTLQKCYDLDPAFGKPEKEAGHIRGVHAPVWAERLPDLNHLLYRAYPRACAIAEAGWSPMGVRSWENFRRKLADHRQFILKRFNYDMERTQGNEPAFRWENNK.

Positions 1–21 are cleaved as a signal peptide; sequence MARPLPILGGILLSFSPPAEA. Residue R122 participates in substrate binding. Catalysis depends on charge relay system residues D151 and H214. The Zn(2+) site is built by C227 and C247. D278 provides a ligand contact to substrate. E279 serves as the catalytic Charge relay system. Residues C288 and C291 each coordinate Zn(2+). Residues W345, 373-375, and 421-423 contribute to the substrate site; these read YLD and WAE.

This sequence belongs to the glycosyl hydrolase 20 family.

It catalyses the reaction Hydrolysis of terminal non-reducing N-acetyl-D-hexosamine residues in N-acetyl-beta-D-hexosaminides.. With respect to regulation, significantly inhibited by the addition of sodium dodecyl sulfate (SDS), but not by EDTA, urea, 2-mercaptoethanol or Triton X-100. Strongly inhibited by Cu2(+) ions, in case of which the activity is decreased by 70%. No significant inhibition with Al(3+), Fe(3+), Ca(2+), Cd(2+), Mg(2+), Mn(2+), Ni(2+) and Zn(2+) ions. Strongly inhibited by PugNAc (O-(2-acetamido-2-deoxy-D-glucopyranosylideneamino) N-phenylcarbamate) in the sub-micromolar concentration range. PugNAc at a concentration of 0.5 mM decreases the activity by 50% and the addition of 1 mM PugNAc fully inhibits the enzyme. No significant reduction in the activity by alkylation using N-ethylmaleimide or 2-iodoacetamide. Its function is as follows. Hydrolyzes terminal GlcNAc residues from terminally unbranched N-glycans and from chitobiose. Hydrolyzes beta-1,6-linked N-acetylglucosamine and beta-1,4-linked N-acetylgalactosamine from pNP-alpha-GalNAc[beta1,3Gal]beta1,6GlcNAc and pNP-beta-GlcNAc-beta1,4-GalNAc substrates, respectively, as well as beta-1,2-linked N-acetylglucosamine units from the non-reducing end of N-glycans. Hydrolyzes GlcNAc residues linked to alpha1,3- or alpha1,6-mannose branch, but has low activity on substrates with more than one GlcNAc residue on one of the mannose branches. Releases terminal GlcNAc moieties from the N-glycopeptide Gly-Glu-Asn-(GlcNAc2Man3GlcNAc2)-Arg with high efficiency. Has moderate hydrolytic activity on the chitobiose moiety of N-glycopeptide substrate Gly-Glu-Asn-(GlcNAc2)-Arg. Does not hydrolyze GlcNAc residues from N-glycan structures bearing a bisecting GlcNAc moiety (beta1,4-linked GlcNAc to the beta1,4-linked core mannose). Potentially capable of cleaving the specific glycoside linkages in the process of mucin degradation in human intestinal tract. Hydrolyzes synthetic substrate pNP-beta-GlcNAc with high activity and pNP-beta-GalNAc to a lesser extent. Does not hydrolyze pNP-beta-glucose, pNP-beta-galactose, pNP-alpha-glucose, pNP-alpha-galactose, pNP-alpha-GlcNAc or pNP-alpha-fucose. The chain is Beta-hexosaminidase Amuc_2018 from Akkermansia muciniphila (strain ATCC BAA-835 / DSM 22959 / JCM 33894 / BCRC 81048 / CCUG 64013 / CIP 107961 / Muc).